The sequence spans 66 residues: Large ribosomal subunit protein bL35 (66 aa).

Over residues 1-44 (MPKLKSHRGAAKRFRKTASGAIKRRGAYRNHILTKKSTKQKRHL) the composition is skewed to basic residues. Positions 1-48 (MPKLKSHRGAAKRFRKTASGAIKRRGAYRNHILTKKSTKQKRHLRVEA) are disordered.

This sequence belongs to the bacterial ribosomal protein bL35 family.

This chain is Large ribosomal subunit protein bL35, found in Legionella pneumophila (strain Corby).